Consider the following 218-residue polypeptide: Cytochrome b6 (218 aa).

A helical membrane pass occupies residues 35–55 (IFYCLGGITLVCFLIQFATGF). Cys-38 contacts heme c. Heme b contacts are provided by His-89 and His-103. Transmembrane regions (helical) follow at residues 93–113 (ASMM…TGGF), 119–139 (LTWV…VTGY), and 189–209 (LHTF…FLMI). Heme b contacts are provided by His-190 and His-205.

This sequence belongs to the cytochrome b family. PetB subfamily. In terms of assembly, the 4 large subunits of the cytochrome b6-f complex are cytochrome b6, subunit IV (17 kDa polypeptide, PetD), cytochrome f and the Rieske protein, while the 4 small subunits are PetG, PetL, PetM and PetN. The complex functions as a dimer. Requires heme b as cofactor. Heme c serves as cofactor.

The protein resides in the cellular thylakoid membrane. Functionally, component of the cytochrome b6-f complex, which mediates electron transfer between photosystem II (PSII) and photosystem I (PSI), cyclic electron flow around PSI, and state transitions. This Synechococcus sp. (strain CC9902) protein is Cytochrome b6.